Here is a 465-residue protein sequence, read N- to C-terminus: Serine hydroxymethyltransferase (465 aa).

Lysine 241 is subject to N6-(pyridoxal phosphate)lysine.

It belongs to the SHMT family. Homotetramer. The cofactor is pyridoxal 5'-phosphate. In terms of tissue distribution, highest expression in the ovary and testis. 6- to 7-fold lower expression in hemocyte, silk gland, midgut and fat body.

It carries out the reaction (6R)-5,10-methylene-5,6,7,8-tetrahydrofolate + glycine + H2O = (6S)-5,6,7,8-tetrahydrofolate + L-serine. The protein operates within one-carbon metabolism; tetrahydrofolate interconversion. Interconversion of serine and glycine. The polypeptide is Serine hydroxymethyltransferase (692975) (Bombyx mori (Silk moth)).